The chain runs to 658 residues: Deoxynucleoside triphosphate triphosphohydrolase SAMHD1 (658 aa).

The segment at 23 to 68 (SQPRVSEVAMQSAPLEQPAKRPRCDGSPRTPPSTPPATANLSADDD) is disordered. S49 carries the post-translational modification Phosphoserine. Phosphothreonine is present on T52. S55 is subject to Phosphoserine. T56 carries the post-translational modification Phosphothreonine. Phosphoserine is present on residues S64 and S125. In terms of domain architecture, SAM spans 77-142 (WEPEDVCSFL…IECIQQLSQS (66 aa)). Residues K148 and V149 each coordinate GTP. N151 contacts dGTP. D169, Q174, and R177 together coordinate GTP. DGTP-binding residues include L182 and V188. In terms of domain architecture, HD spans 196–348 (RFEHSLGVGY…GIDVDKWDYF (153 aa)). Residues H199, H238, and D239 each contribute to the Mn(2+) site. 4 residues coordinate dGTP: D239, H247, H265, and E266. The active site involves H265. D343 contacts Mn(2+). DGTP contacts are provided by Y347, D351, R365, R395, K397, N401, Y417, H419, and K420. GTP-binding residues include R494 and K498. K509 participates in a covalent cross-link: Glycyl lysine isopeptide (Lys-Gly) (interchain with G-Cter in SUMO2). K565 is a GTP binding site. K565 contacts dGTP. T634 carries the post-translational modification Phosphothreonine. T634 bears the (Microbial infection) Phosphothreonine mark.

It belongs to the SAMHD1 family. Homodimer; in absence of GTP and dNTP. Homotetramer; in GTP- and dNTP-bound form. Interacts with MRE11; leading to stimulate the exonuclease activity of MRE11. Interacts with RBBP8/CtIP. Interacts with RBBP8/CtIP. Interacts (via its C-terminus) with CD81. It depends on Zn(2+) as a cofactor. Post-translationally, phosphorylation at Thr-634 by CDK1 acts as a switch to control deoxynucleoside triphosphate (dNTPase)-dependent and -independent functions. Phosphorylation at Thr-634 takes place in cycling cells: it reduces the stability of the homotetramer, impairing the dNTPase activity and subsequent ability to restrict infection by viruses. It also inhibits ability to suppress LINE-1 retrotransposon activity. In contrast, phosphorylation at Thr-634 promotes DNA end resection at stalled replication forks in response to DNA damage. (Microbial infection) Phosphorylation at Thr-634 by mouse cytomegalovirus kinase M97 leads to a reduced level of dNTP hydrolase activity and the loss of viral restriction. In terms of processing, not phosphorylated by CDK1 at the C-terminus.

The protein resides in the nucleus. The protein localises to the chromosome. It carries out the reaction a 2'-deoxyribonucleoside 5'-triphosphate + H2O = a 2'-deoxyribonucleoside + triphosphate + H(+). The enzyme catalyses dATP + H2O = 2'-deoxyadenosine + triphosphate + H(+). It catalyses the reaction dCTP + H2O = 2'-deoxycytidine + triphosphate + H(+). The catalysed reaction is dGTP + H2O = 2'-deoxyguanosine + triphosphate + H(+). It carries out the reaction dTTP + H2O = thymidine + triphosphate + H(+). Its activity is regulated as follows. Allosterically activated and regulated via the combined actions of GTP and dNTPs (dATP, dGTP, dTTP and dCTP): Allosteric site 1 binds GTP, while allosteric site 2 binds dNTP. Allosteric activation promotes the formation of highly active homotetramers. Isoform 1: Phosphorylation at Thr-634 impairs homotetramerization, thereby inhibiting dNTPase activity, leading to reduced ability to restrict infection by viruses. In terms of biological role, protein that acts both as a host restriction factor involved in defense response to virus and as a regulator of DNA end resection at stalled replication forks. Has deoxynucleoside triphosphate (dNTPase) activity, which is required to restrict infection by viruses: dNTPase activity reduces cellular dNTP levels to levels too low for retroviral reverse transcription to occur, blocking early-stage virus replication in dendritic and other myeloid cells. Likewise, suppresses LINE-1 retrotransposon activity. In addition to virus restriction, dNTPase activity acts as a regulator of DNA precursor pools by regulating dNTP pools. Phosphorylation at Thr-634 acts as a switch to control dNTPase-dependent and -independent functions: it inhibits dNTPase activity and ability to restrict infection by viruses, while it promotes DNA end resection at stalled replication forks. Functions during S phase at stalled DNA replication forks to promote the resection of gapped or reversed forks: acts by stimulating the exonuclease activity of MRE11, activating the ATR-CHK1 pathway and allowing the forks to restart replication. Its ability to promote degradation of nascent DNA at stalled replication forks is required to prevent induction of type I interferons, thereby preventing chronic inflammation. Ability to promote DNA end resection at stalled replication forks is independent of dNTPase activity. Enhances immunoglobulin hypermutation in B-lymphocytes by promoting transversion mutation. This chain is Deoxynucleoside triphosphate triphosphohydrolase SAMHD1, found in Mus musculus (Mouse).